A 359-amino-acid polypeptide reads, in one-letter code: tRNA/tmRNA (uracil-C(5))-methyltransferase (359 aa).

S-adenosyl-L-methionine is bound by residues Q183, Y211, N216, E232, and D292. C317 (nucleophile) is an active-site residue. The Proton acceptor role is filled by E351.

This sequence belongs to the class I-like SAM-binding methyltransferase superfamily. RNA M5U methyltransferase family. TrmA subfamily.

It carries out the reaction uridine(54) in tRNA + S-adenosyl-L-methionine = 5-methyluridine(54) in tRNA + S-adenosyl-L-homocysteine + H(+). It catalyses the reaction uridine(341) in tmRNA + S-adenosyl-L-methionine = 5-methyluridine(341) in tmRNA + S-adenosyl-L-homocysteine + H(+). Its function is as follows. Dual-specificity methyltransferase that catalyzes the formation of 5-methyluridine at position 54 (m5U54) in all tRNAs, and that of position 341 (m5U341) in tmRNA (transfer-mRNA). The chain is tRNA/tmRNA (uracil-C(5))-methyltransferase from Pseudomonas fluorescens (strain Pf0-1).